An 80-amino-acid chain; its full sequence is Protein CEBPZOS (80 aa).

A helical transmembrane segment spans residues 15–32 (GVLVAELVGVFGAYFLFS).

Its subcellular location is the mitochondrion membrane. The protein is Protein CEBPZOS of Homo sapiens (Human).